The following is a 229-amino-acid chain: Protein-L-isoaspartate O-methyltransferase (229 aa).

Ser78 is a catalytic residue.

The protein belongs to the methyltransferase superfamily. L-isoaspartyl/D-aspartyl protein methyltransferase family.

It is found in the cytoplasm. The enzyme catalyses [protein]-L-isoaspartate + S-adenosyl-L-methionine = [protein]-L-isoaspartate alpha-methyl ester + S-adenosyl-L-homocysteine. In terms of biological role, catalyzes the methyl esterification of L-isoaspartyl residues in peptides and proteins that result from spontaneous decomposition of normal L-aspartyl and L-asparaginyl residues. It plays a role in the repair and/or degradation of damaged proteins. This Chromohalobacter salexigens (strain ATCC BAA-138 / DSM 3043 / CIP 106854 / NCIMB 13768 / 1H11) protein is Protein-L-isoaspartate O-methyltransferase.